A 212-amino-acid polypeptide reads, in one-letter code: Ras-related protein Rab-2A (212 aa).

Alanine 2 carries the post-translational modification N-acetylalanine. The tract at residues 2 to 19 (AYAYLFKYIIIGDTGVGK) is required for interaction with PRKCI. 7 residues coordinate GTP: glycine 16, valine 17, glycine 18, lysine 19, serine 20, cysteine 21, and threonine 38. Serine 20 is a Mg(2+) binding site. Positions 37–42 (LTIGVE) match the Switch 1 motif. Positions 38 and 61 each coordinate Mg(2+). A Switch 2 motif is present at residues 63–72 (AGQESFRSIT). Residues glycine 64, asparagine 119, lysine 120, aspartate 122, alanine 150, and lysine 151 each contribute to the GTP site. 2 S-geranylgeranyl cysteine lipidation sites follow: cysteine 211 and cysteine 212.

Belongs to the small GTPase superfamily. Rab family. In terms of assembly, interacts with PRKCI. Interacts with TRIP11. Interacts (in GTP-bound form) with GARIN1B. Interacts (GTP-bound) with HOPS complex component VPS39; interaction contributes to obtaining a functional HOPS complex that promotes autophagosome-lysosome membrane fusion driven by STX17-SNAP29-VAMP8. May interact with VPS41. It depends on Mg(2+) as a cofactor. Post-translationally, prenylated. Prenylation is required for association with cellular membranes. Brain and parietal cells.

The protein resides in the endoplasmic reticulum-Golgi intermediate compartment membrane. Its subcellular location is the melanosome. It localises to the endoplasmic reticulum membrane. The protein localises to the golgi apparatus membrane. It is found in the cytoplasmic vesicle. The protein resides in the secretory vesicle. Its subcellular location is the acrosome. It localises to the autophagosome membrane. The catalysed reaction is GTP + H2O = GDP + phosphate + H(+). Its activity is regulated as follows. Regulated by guanine nucleotide exchange factors (GEFs) which promote the exchange of bound GDP for free GTP, GTPase activating proteins (GAPs) which increase the GTP hydrolysis activity, and GDP dissociation inhibitors (GDIs) which inhibit the dissociation of the nucleotide from the GTPase. Functionally, the small GTPases Rab are key regulators of intracellular membrane trafficking, from the formation of transport vesicles to their fusion with membranes. Rabs cycle between active GTP-bound and inactive GDP-bound states. In their active state, drive transport of vesicular carriers from donor organelles to acceptor organelles to regulate the membrane traffic that maintains organelle identity and morphology. RAB2A regulates autophagy by promoting autophagosome-lysosome fusion via recruitment of the HOPS endosomal tethering complex; this process involves autophagosomal RAB2A and lysosomal RAB39A recruitment of HOPS subcomplexes VPS39-VPS11 and VPS41-VPS16-VPS18-VPS33A, respectively, which assemble into a functional complex to mediate membrane tethering and SNAREs-driven membrane fusion. Required for protein transport from the endoplasmic reticulum to the Golgi complex. Regulates the compacted morphology of the Golgi. Together with RAB2B, redundantly required for efficient autophagic flux. In Oryctolagus cuniculus (Rabbit), this protein is Ras-related protein Rab-2A (RAB2A).